The primary structure comprises 466 residues: Uronate isomerase (466 aa).

This sequence belongs to the metallo-dependent hydrolases superfamily. Uronate isomerase family.

It carries out the reaction D-glucuronate = D-fructuronate. The enzyme catalyses aldehydo-D-galacturonate = keto-D-tagaturonate. It participates in carbohydrate metabolism; pentose and glucuronate interconversion. This is Uronate isomerase from Streptococcus agalactiae serotype V (strain ATCC BAA-611 / 2603 V/R).